The following is a 130-amino-acid chain: uncharacterized protein (130 aa).

The disordered stretch occupies residues 1 to 34 (MTAVGGSPPTRRCPATEDRAPATVATPSSTDPTA).

To M.tuberculosis Rv1583c.

This is an uncharacterized protein from Mycobacterium tuberculosis (strain CDC 1551 / Oshkosh).